The primary structure comprises 282 residues: NFU1 iron-sulfur cluster scaffold homolog, mitochondrial (282 aa).

The N-terminal 27 residues, 1 to 27, are a transit peptide targeting the mitochondrion; that stretch reads MSKLLSYTARIILRNSRITVRQLVRGF. Positions 178–246 are nifU; sequence IKELLDTRIR…IPEVESVEQV (69 aa). [4Fe-4S] cluster contacts are provided by Cys215 and Cys218. The disordered stretch occupies residues 263-282; sequence KNLKQKEPAGAPVGIGGGPN.

Belongs to the NifU family.

Its subcellular location is the mitochondrion. Its function is as follows. Molecular scaffold for [Fe-S] cluster assembly of mitochondrial iron-sulfur proteins. The polypeptide is NFU1 iron-sulfur cluster scaffold homolog, mitochondrial (Drosophila persimilis (Fruit fly)).